The following is a 226-amino-acid chain: Putative ankyrin repeat protein RF_0939 (226 aa).

4 ANK repeats span residues 56-86 (VSTTELFLASSNNALKVAEWLVETKKANVNM), 91-120 (FKDTPLNSAARHGSYKVAEYLIAKGAAVNG), 125-154 (LLGPPLYEAVSGKYLNVAKLLLEKGAAVDQ), and 157-194 (SGETPLHAVAKNVRYTSKDIKDDEIYKLLVSYGADTNA).

The protein is Putative ankyrin repeat protein RF_0939 of Rickettsia felis (strain ATCC VR-1525 / URRWXCal2) (Rickettsia azadi).